The chain runs to 487 residues: N-succinylglutamate 5-semialdehyde dehydrogenase (487 aa).

Gly-221–Gly-226 contributes to the NAD(+) binding site. Residues Glu-244 and Cys-278 contribute to the active site.

It belongs to the aldehyde dehydrogenase family. AstD subfamily.

It carries out the reaction N-succinyl-L-glutamate 5-semialdehyde + NAD(+) + H2O = N-succinyl-L-glutamate + NADH + 2 H(+). Its pathway is amino-acid degradation; L-arginine degradation via AST pathway; L-glutamate and succinate from L-arginine: step 4/5. Catalyzes the NAD-dependent reduction of succinylglutamate semialdehyde into succinylglutamate. The protein is N-succinylglutamate 5-semialdehyde dehydrogenase of Pseudomonas putida (strain ATCC 47054 / DSM 6125 / CFBP 8728 / NCIMB 11950 / KT2440).